Consider the following 1071-residue polypeptide: Tricorn protease (1071 aa).

Residues 39-310 form a six-bladed beta propeller region; it reads MPNLLLNPDI…EKIEKIEIGD (272 aa). A binds the substrate's C-terminus region spans residues 131-132; the sequence is RR. The seven-bladed beta propeller stretch occupies residues 326–675; sequence AEDFSPLDGD…EDERTVETDK (350 aa). A C-1; helical bundle region spans residues 679–745; that stretch reads VSSIHEEFLQ…VEMQGEYRTS (67 aa). His746 functions as the Charge relay system in the catalytic mechanism. The interval 761–855 is PDZ-like; the sequence is RSGRIACDFK…DLMIDILDDD (95 aa). Residues 856 to 1061 form a C-2; alpha-beta sandwich region; the sequence is RFIRYRSWVE…IDALIEELRN (206 aa). 916–918 contacts substrate; the sequence is GGG. The active-site Nucleophile is the Ser965. A substrate-binding site is contributed by 993-995; sequence GIT. The active-site Charge relay system is Glu1023.

It belongs to the peptidase S41B family. As to quaternary structure, part of the Tricorn proteolytic complex. Assembles to form a hexameric toroid, 20 copies of which may then assemble to form an icosahedral supermolecule of 14.6 MDa.

The protein resides in the cytoplasm. In terms of biological role, tricorn degrades oligopeptides (probably derived from the proteasome) and channels the products to F1, F2 and F3 proteases, which then catalyze the terminal degradation step, yielding free amino acids. In Thermoplasma acidophilum (strain ATCC 25905 / DSM 1728 / JCM 9062 / NBRC 15155 / AMRC-C165), this protein is Tricorn protease (tri).